A 76-amino-acid chain; its full sequence is Virulence-associated protein VagC (76 aa).

Positions 4-45 (VSIFKNGNNRAIRLPRDLDFEGVSELEIVREGDSIILRPVRP) constitute a SpoVT-AbrB domain.

It belongs to the VapB family.

The sequence is that of Virulence-associated protein VagC (vagC) from Salmonella dublin.